The chain runs to 532 residues: Monolignol oxidoreductase AtBBE-like 15 (532 aa).

Positions 1 to 27 (MAFAISKRNATLFLVTLLLISVPLSSS) are cleaved as a signal peptide. The cysteines at positions 36 and 100 are disulfide-linked. A glycan (N-linked (GlcNAc...) asparagine) is linked at Asn-57. Residues 76–254 (TPSNPKPVFI…LAWKIKLVPV (179 aa)) enclose the FAD-binding PCMH-type domain. A cross-link (6-(S-cysteinyl)-8alpha-(pros-histidyl)-FAD (His-Cys)) is located at residues 115–179 (HDYEGLSFVA…QTHGFPAGLC (65 aa)). 2 N-linked (GlcNAc...) asparagine glycosylation sites follow: Asn-306 and Asn-431.

Belongs to the oxygen-dependent FAD-linked oxidoreductase family. FAD serves as cofactor. Post-translationally, the FAD cofactor is bound via a bicovalent 6-S-cysteinyl, 8alpha-N1-histidyl FAD linkage. In terms of tissue distribution, expressed in sepals and stamen.

Its subcellular location is the secreted. It localises to the cell wall. It carries out the reaction (E)-4-coumaroyl alcohol + A = (E)-4-coumaraldehyde + AH2. The enzyme catalyses (E)-coniferol + A = (E)-coniferaldehyde + AH2. The catalysed reaction is (E)-sinapyl alcohol + A = (E)-sinapaldehyde + AH2. It catalyses the reaction 4-O-(beta-D-glucosyl)-(E)-coniferol + A = 4-O-(beta-D-glucosyl)-4-(E)-coniferyl aldehyde + AH2. Required for endosperm development and polar nuclei fusion. Mediates oxidation of p-hydroxylated derivatives of cinnamyl alcohol (i.e. the monolignols p-coumaryl-, coniferyl-, and sinapyl alcohol) to their corresponding aldehydes. Can also use the beta-O-glycosylated form of coniferyl alcohol (coniferin) as substrate, but is much less efficient towards cinnamyl alcohol. The electron acceptor required for these reactions is not known, but does not seem to be dioxygen. In Arabidopsis thaliana (Mouse-ear cress), this protein is Monolignol oxidoreductase AtBBE-like 15.